The sequence spans 92 residues: C-C motif chemokine 4 (92 aa).

The signal sequence occupies residues 1–23 (MKLCVSALSLLLLVAAFCAPGFS). Intrachain disulfides connect Cys-34–Cys-58 and Cys-35–Cys-74.

It belongs to the intercrine beta (chemokine CC) family. Homodimer.

Its subcellular location is the secreted. Functionally, monokine with inflammatory and chemokinetic properties. The protein is C-C motif chemokine 4 (Ccl4) of Mus musculus (Mouse).